Consider the following 403-residue polypeptide: MGKHIQYQGGNFKNTAPTKYQPTDLKVEEVLINIGPQHPATHGILRLEVILDGEIVVDVVPHLGYLHRCFEKHAATLPYNQTIPFVDRLDYLAAMNSEHAFAMGVEHMLGLTGKLPRRVEYIRVLMAELNRLASHFMAIGTYGIDLGAFTSFLWLMRDREYILRLFEWASGARMLYNYIWIGGLYYDLPVGFEERCLEFITYLKPKLEEINQLLIDNTLFIKRTANVGVLPLATAINHGVSGPILRASGLRLDLRRIDGYSIYPELSFDIPIGEGLMGHVGDCWDRTWVKFQECKESIKITEQCLVRLTSDLKRTADFNPQKMVPKKVRTKAQDCYIRAENPRGELGFFFRASDNGDKPIRCKARSSSFSNLSVISSIAKGQVLADLIAIIGSIDIVLGEIDR.

The protein belongs to the complex I 49 kDa subunit family. As to quaternary structure, NDH-1 is composed of 14 different subunits. Subunits NuoB, C, D, E, F, and G constitute the peripheral sector of the complex.

It localises to the cell membrane. It carries out the reaction a quinone + NADH + 5 H(+)(in) = a quinol + NAD(+) + 4 H(+)(out). Functionally, NDH-1 shuttles electrons from NADH, via FMN and iron-sulfur (Fe-S) centers, to quinones in the respiratory chain. The immediate electron acceptor for the enzyme in this species is believed to be a menaquinone. Couples the redox reaction to proton translocation (for every two electrons transferred, four hydrogen ions are translocated across the cytoplasmic membrane), and thus conserves the redox energy in a proton gradient. This chain is NADH-quinone oxidoreductase subunit D, found in Amoebophilus asiaticus (strain 5a2).